The chain runs to 255 residues: Thiazole synthase (255 aa).

The active-site Schiff-base intermediate with DXP is K95. 1-deoxy-D-xylulose 5-phosphate is bound by residues G156, A182–G183, and N204–T205.

The protein belongs to the ThiG family. As to quaternary structure, homotetramer. Forms heterodimers with either ThiH or ThiS.

Its subcellular location is the cytoplasm. The enzyme catalyses [ThiS sulfur-carrier protein]-C-terminal-Gly-aminoethanethioate + 2-iminoacetate + 1-deoxy-D-xylulose 5-phosphate = [ThiS sulfur-carrier protein]-C-terminal Gly-Gly + 2-[(2R,5Z)-2-carboxy-4-methylthiazol-5(2H)-ylidene]ethyl phosphate + 2 H2O + H(+). The protein operates within cofactor biosynthesis; thiamine diphosphate biosynthesis. In terms of biological role, catalyzes the rearrangement of 1-deoxy-D-xylulose 5-phosphate (DXP) to produce the thiazole phosphate moiety of thiamine. Sulfur is provided by the thiocarboxylate moiety of the carrier protein ThiS. In vitro, sulfur can be provided by H(2)S. This chain is Thiazole synthase, found in Aeromonas salmonicida (strain A449).